Consider the following 166-residue polypeptide: Large ribosomal subunit protein uL10 (166 aa).

Belongs to the universal ribosomal protein uL10 family. In terms of assembly, part of the ribosomal stalk of the 50S ribosomal subunit. The N-terminus interacts with L11 and the large rRNA to form the base of the stalk. The C-terminus forms an elongated spine to which L12 dimers bind in a sequential fashion forming a multimeric L10(L12)X complex.

Functionally, forms part of the ribosomal stalk, playing a central role in the interaction of the ribosome with GTP-bound translation factors. The protein is Large ribosomal subunit protein uL10 of Oceanobacillus iheyensis (strain DSM 14371 / CIP 107618 / JCM 11309 / KCTC 3954 / HTE831).